A 1108-amino-acid polypeptide reads, in one-letter code: Folliculin-interacting protein 2 (1108 aa).

Positions Phe38 to Ile456 constitute a uDENN FNIP1/2-type domain. 4 disordered regions span residues Gln89–Leu112, Arg209–Ser233, Ser598–Asp635, and Gln649–Arg671. Residues Ser91–His106 show a composition bias toward low complexity. Phosphoserine is present on residues Ser212 and Ser217. A cDENN FNIP1/2-type domain is found at Thr464 to Gln1034. The segment at Asp540 to Glu905 is interaction with PRKAA1. Residues Leu606–Gln620 are compositionally biased toward basic and acidic residues. Positions Gln652–Pro663 are enriched in polar residues. Phosphoserine occurs at positions 720, 721, and 723. Residues Phe1044 to His1099 form the dDENN FNIP1/2-type domain.

This sequence belongs to the FNIP family. In terms of assembly, homodimer and homomultimer. Heterodimer and heteromultimer with FNIP1. Interacts (via C-terminus) with FLCN (via C-terminus). Phosphorylated FLCN is preferentially bound. Component of the lysosomal folliculin complex (LFC), composed of FLCN, FNIP1 (or FNIP2), RagA/RRAGA or RagB/RRAGB GDP-bound, RagC/RRAGC or RagD/RRAGD GTP-bound, and Ragulator. Interacts with PRKAA1, PRKAB1 and PRKAG1 subunits of 5'-AMP-activated protein kinase. Interacts with HSP70, HSP90AA1, STIP1, PTGES3, CDC37, BRAF, GCR and CDK4. Post-translationally, phosphorylated by AMPK.

It localises to the lysosome membrane. The protein localises to the cytoplasm. In terms of biological role, binding partner of the GTPase-activating protein FLCN: involved in the cellular response to amino acid availability by regulating the non-canonical mTORC1 signaling cascade controlling the MiT/TFE factors TFEB and TFE3. Required to promote FLCN recruitment to lysosomes and interaction with Rag GTPases, leading to activation of the non-canonical mTORC1 signaling. In low-amino acid conditions, component of the lysosomal folliculin complex (LFC) on the membrane of lysosomes, which inhibits the GTPase-activating activity of FLCN, thereby inactivating mTORC1 and promoting nuclear translocation of TFEB and TFE3. Upon amino acid restimulation, disassembly of the LFC complex liberates the GTPase-activating activity of FLCN, leading to activation of mTORC1 and subsequent inactivation of TFEB and TFE3. Together with FLCN, regulates autophagy: following phosphorylation by ULK1, interacts with GABARAP and promotes autophagy. In addition to its role in mTORC1 signaling, also acts as a co-chaperone of HSP90AA1/Hsp90: inhibits the ATPase activity of HSP90AA1/Hsp90, leading to activate both kinase and non-kinase client proteins of HSP90AA1/Hsp90. Acts as a scaffold to load client protein FLCN onto HSP90AA1/Hsp90. Competes with the activating co-chaperone AHSA1 for binding to HSP90AA1, thereby providing a reciprocal regulatory mechanism for chaperoning of client proteins. May play a role in the signal transduction pathway of apoptosis induced by O6-methylguanine-mispaired lesions. The polypeptide is Folliculin-interacting protein 2 (Mus musculus (Mouse)).